The sequence spans 215 residues: MPAFNRLFPLASLVLIYWVSVCFPVCVEVPSETEAVQGNPMKLRCISCMKREEVEATTVVEWFYRPEGGKDFLIYEYRNGHQEVESPFQGRLQWNGSKDLQDVSITVLNVTLNDSGLYTCNVSREFEFEAHRPFVKTTRLIPLRVTEEAGEDFTSVVSEIMMYILLVFLTLWLLIEMIYCYRKVSKAEEAAQENASDYLAIPSENKENSAVPVEE.

Residues 1–22 form the signal peptide; sequence MPAFNRLFPLASLVLIYWVSVC. Residues 23–156 lie on the Extracellular side of the membrane; the sequence is FPVCVEVPSE…EEAGEDFTSV (134 aa). 2 disulfide bridges follow: Cys26/Cys48 and Cys45/Cys120. The Ig-like C2-type domain occupies 32 to 154; it reads ETEAVQGNPM…VTEEAGEDFT (123 aa). 4 N-linked (GlcNAc...) asparagine glycosylation sites follow: Asn95, Asn109, Asn113, and Asn121. Residues 157-178 form a helical membrane-spanning segment; sequence VSEIMMYILLVFLTLWLLIEMI. At 179–215 the chain is on the cytoplasmic side; sequence YCYRKVSKAEEAAQENASDYLAIPSENKENSAVPVEE.

The protein belongs to the sodium channel auxiliary subunit SCN3B (TC 8.A.17) family. A voltage-gated sodium (Nav) channel consists of an ion-conducting pore-forming alpha subunit functional on its own that is regulated by one or more beta subunits. Forms homodimers and homotrimers. SCN3B is non-covalently associated with alpha subunits and induces the formation of alpha subunit oligomers, including trimers. Interacts with SCN5A/Nav1.5; regulatory subunit of SCN5A/Nav1.5. Interacts with SCN7A/Nav2.1; probable regulatory subunit of SCN7A/Nav2.1. Interacts with SCN10A; regulatory subunit of SCN10A/Nav1.8. Interacts with NFASC; probably involved in targeting the sodium channels to the nodes of Ranvier. Post-translationally, intramolecular disulfide bonds favor the voltage-gated sodium channel oligomeric complex assembly. In terms of processing, N-glycosylated. Expressed in the atrium.

Its subcellular location is the cell membrane. Its function is as follows. Regulatory subunit of multiple voltage-gated sodium (Nav) channels directly mediating the depolarization of excitable membranes. Navs, also called VGSCs (voltage-gated sodium channels) or VDSCs (voltage-dependent sodium channels), operate by switching between closed and open conformations depending on the voltage difference across the membrane. In the open conformation they allow Na(+) ions to selectively pass through the pore, along their electrochemical gradient. The influx of Na+ ions provokes membrane depolarization, initiating the propagation of electrical signals throughout cells and tissues. The accessory beta subunits participate in localization and functional modulation of the Nav channels. Modulates the activity of SCN2A/Nav1.2, causing a hyperpolarizing shift in the voltage-dependence of inactivation of the channel and increasing the fraction of channels operating in the fast gating mode. Modulates the activity of SCN5A/Nav1.5. Could also regulate the atypical sodium channel SCN7A/Nav2.1. Modulates the activity of SCN10A/Nav1.8, regulating its oligomerization and accelerating the recovery from inactivation. This chain is Sodium channel regulatory subunit beta-3, found in Homo sapiens (Human).